Reading from the N-terminus, the 174-residue chain is Pediocin PA-1 biosynthesis protein PedC (174 aa).

Functionally, probably involved in pediocin PA-1 biosynthesis. This Pediococcus acidilactici protein is Pediocin PA-1 biosynthesis protein PedC (pedC).